A 456-amino-acid chain; its full sequence is Bifunctional protein GlmU (456 aa).

The segment at 1–229 (MLNSAMSVVI…ISETDGVNNR (229 aa)) is pyrophosphorylase. Residues 11–14 (LAAG), lysine 25, glutamine 76, 81–82 (GT), 103–105 (YGD), glycine 140, glutamate 154, asparagine 169, and asparagine 227 contribute to the UDP-N-acetyl-alpha-D-glucosamine site. Aspartate 105 lines the Mg(2+) pocket. Position 227 (asparagine 227) interacts with Mg(2+). Positions 230 to 250 (LQLSRLERIYQAEQAEKLLLS) are linker. The N-acetyltransferase stretch occupies residues 251-456 (GVMLRDPARF…QGWQRPVKKK (206 aa)). Residues arginine 333 and lysine 351 each coordinate UDP-N-acetyl-alpha-D-glucosamine. The Proton acceptor role is filled by histidine 363. UDP-N-acetyl-alpha-D-glucosamine-binding residues include tyrosine 366 and asparagine 377. Acetyl-CoA-binding positions include alanine 380, 386–387 (NY), serine 405, alanine 423, and arginine 440.

This sequence in the N-terminal section; belongs to the N-acetylglucosamine-1-phosphate uridyltransferase family. The protein in the C-terminal section; belongs to the transferase hexapeptide repeat family. Homotrimer. Requires Mg(2+) as cofactor.

Its subcellular location is the cytoplasm. The enzyme catalyses alpha-D-glucosamine 1-phosphate + acetyl-CoA = N-acetyl-alpha-D-glucosamine 1-phosphate + CoA + H(+). The catalysed reaction is N-acetyl-alpha-D-glucosamine 1-phosphate + UTP + H(+) = UDP-N-acetyl-alpha-D-glucosamine + diphosphate. It functions in the pathway nucleotide-sugar biosynthesis; UDP-N-acetyl-alpha-D-glucosamine biosynthesis; N-acetyl-alpha-D-glucosamine 1-phosphate from alpha-D-glucosamine 6-phosphate (route II): step 2/2. Its pathway is nucleotide-sugar biosynthesis; UDP-N-acetyl-alpha-D-glucosamine biosynthesis; UDP-N-acetyl-alpha-D-glucosamine from N-acetyl-alpha-D-glucosamine 1-phosphate: step 1/1. It participates in bacterial outer membrane biogenesis; LPS lipid A biosynthesis. In terms of biological role, catalyzes the last two sequential reactions in the de novo biosynthetic pathway for UDP-N-acetylglucosamine (UDP-GlcNAc). The C-terminal domain catalyzes the transfer of acetyl group from acetyl coenzyme A to glucosamine-1-phosphate (GlcN-1-P) to produce N-acetylglucosamine-1-phosphate (GlcNAc-1-P), which is converted into UDP-GlcNAc by the transfer of uridine 5-monophosphate (from uridine 5-triphosphate), a reaction catalyzed by the N-terminal domain. This chain is Bifunctional protein GlmU, found in Salmonella choleraesuis (strain SC-B67).